We begin with the raw amino-acid sequence, 237 residues long: Probable transcriptional regulatory protein WS1016 (237 aa).

Belongs to the TACO1 family.

It is found in the cytoplasm. This Wolinella succinogenes (strain ATCC 29543 / DSM 1740 / CCUG 13145 / JCM 31913 / LMG 7466 / NCTC 11488 / FDC 602W) (Vibrio succinogenes) protein is Probable transcriptional regulatory protein WS1016.